A 521-amino-acid polypeptide reads, in one-letter code: Bifunctional purine biosynthesis protein PurH (521 aa).

One can recognise an MGS-like domain in the interval 1–145 (MIKQALISVS…KNHRDVTVVV (145 aa)).

This sequence belongs to the PurH family.

It carries out the reaction (6R)-10-formyltetrahydrofolate + 5-amino-1-(5-phospho-beta-D-ribosyl)imidazole-4-carboxamide = 5-formamido-1-(5-phospho-D-ribosyl)imidazole-4-carboxamide + (6S)-5,6,7,8-tetrahydrofolate. The catalysed reaction is IMP + H2O = 5-formamido-1-(5-phospho-D-ribosyl)imidazole-4-carboxamide. Its pathway is purine metabolism; IMP biosynthesis via de novo pathway; 5-formamido-1-(5-phospho-D-ribosyl)imidazole-4-carboxamide from 5-amino-1-(5-phospho-D-ribosyl)imidazole-4-carboxamide (10-formyl THF route): step 1/1. It functions in the pathway purine metabolism; IMP biosynthesis via de novo pathway; IMP from 5-formamido-1-(5-phospho-D-ribosyl)imidazole-4-carboxamide: step 1/1. The protein is Bifunctional purine biosynthesis protein PurH of Paraburkholderia phytofirmans (strain DSM 17436 / LMG 22146 / PsJN) (Burkholderia phytofirmans).